Consider the following 355-residue polypeptide: Cytoplasmic tRNA 2-thiolation protein 1 (355 aa).

The disordered stretch occupies residues 320-341 (GIGRPRGVNGDHNKETKKPGSV). Residues 328 to 337 (NGDHNKETKK) show a composition bias toward basic and acidic residues.

It belongs to the TtcA family. CTU1/NCS6/ATPBD3 subfamily.

The protein localises to the cytoplasm. It functions in the pathway tRNA modification; 5-methoxycarbonylmethyl-2-thiouridine-tRNA biosynthesis. Functionally, plays a central role in 2-thiolation of mcm(5)S(2)U at tRNA wobble positions of tRNA(Lys), tRNA(Glu) and tRNA(Gln). Directly binds tRNAs and probably acts by catalyzing adenylation of tRNAs, an intermediate required for 2-thiolation. It is unclear whether it acts as a sulfurtransferase that transfers sulfur from thiocarboxylated URM1 onto the uridine of tRNAs at wobble position. This is Cytoplasmic tRNA 2-thiolation protein 1 from Arabidopsis thaliana (Mouse-ear cress).